The following is a 248-amino-acid chain: UPF0736 protein BC_1176 (248 aa).

It belongs to the UPF0736 family.

In Bacillus cereus (strain ATCC 14579 / DSM 31 / CCUG 7414 / JCM 2152 / NBRC 15305 / NCIMB 9373 / NCTC 2599 / NRRL B-3711), this protein is UPF0736 protein BC_1176.